The primary structure comprises 495 residues: Heterogeneous nuclear ribonucleoprotein Q (495 aa).

Basic and acidic residues predominate over residues 1 to 10; that stretch reads MSDARDNDDR. Residues 1–101 form a disordered region; that stretch reads MSDARDNDDR…KPPSPIDDED (101 aa). 2 stretches are compositionally biased toward acidic residues: residues 11–46 and 67–101; these read VDFEEGSYSEMEDEVEEEQVEEYEEEEEEDDDDDDV and MEDVQEEIAEDDDNHIDIETADDDEKPPSPIDDED. RRM domains follow at residues 116–194, 196–278, and 292–368; these read SEVF…LSET, NRLF…WADP, and KALY…LAKP. Positions 452-495 are disordered; that stretch reads MPMAAAPPQRPRRNDRNNGSSGGSGRDNSHEHDGNRGGRRYRPY. The segment covering 478–487 has biased composition (basic and acidic residues); sequence DNSHEHDGNR.

Interacts with LHP1 in the nucleus on a common set of chromatin regions. In terms of tissue distribution, predominantly expressed in vascular and meristematic tissues. Expressed throughout development in seedlings, roots, leaves, floral buds and siliques.

The protein resides in the nucleus. The protein localises to the cytoplasm. It is found in the microsome. Functionally, transcriptional activator that binds DNA on GAGA-like motif and 5'-(C/G)ACGTG(G/T)C(A/G)-3' consensus motif in the promoters of target genes. Component of ribonucleosomes, which are complexes of at least 20 other different heterogeneous nuclear ribonucleoproteins (hnRNP). hnRNP play an important role in processing of precursor mRNA in the nucleus. Required during flower development and for cell fate determination. Acts both as an antagonist and as a promoter of polycomb LHP1 gene regulation activity, depending of target genes, to regulate the transcription of stress-responsive and flowering genes. May regulate histone H3 trimethylation on lysine 27 (H3K27me3). Recognizes and binds histone H3 tails methylated at 'Lys-4' (H3K4me) and acetylated at 'Lys-9' (H3K9ac), leading to epigenetic activation. When in complex with LHP1, recognizes and binds histone H3 tails methylated at 'Lys-4' (H3K4me) and 'Lys-27' (H3K27me), mostly corresponding to stress-responsive genes. May function as a suppressor of cell-autonomous immune responses involving glucosinolates, salicylic acid (SA) and jasmonic acid (JA) pathways toward pathogenic bacteria and fungi. This is Heterogeneous nuclear ribonucleoprotein Q from Arabidopsis thaliana (Mouse-ear cress).